We begin with the raw amino-acid sequence, 740 residues long: MPEQHPPITETTTGAASNGCPVVGHMKYPVEGGGNQDWWPNRLNLKVLHQNPAVADPMGAAFDYAAEVATIDVDALTRDIEEVMTTSQPWWPADYGHYGPLFIRMAWHAAGTYRIHDGRGGAGGGMQRFAPLNSWPDNASLDKARRLLWPVKKKYGKKLSWADLIVFAGNCALESMGFKTFGFGFGRVDQWEPDEVYWGKEATWLGDERYSGKRDLENPLAAVQMGLIYVNPEGPNGNPDPMAAAVDIRETFRRMAMNDVETAALIVGGHTFGKTHGAGPADLVGPEPEAAPLEQMGLGWKSSYGTGTGKDAITSGIEVVWTNTPTKWDNSFLEILYGYEWELTKSPAGAWQYTAKDGAGAGTIPDPFGGPGRSPTMLATDLSLRVDPIYERITRRWLEHPEELADEFAKAWYKLIHRDMGPVARYLGPLVPKQTLLWQDPVPAVSHDLVGEAEIASLKSQILASGLTVSQLVSTAWAAASSFRGSDKRGGANGGRIRLQPQVGWEVNDPDGDLRKVIRTLEEIQESFNSAAPGNIKVSFADLVVLGGCAAIEKAAKAAGHNITVPFTPGRTDASQEQTDVESFAVLEPKADGFRNYLGKGNPLPAEYMLLDKANLLTLSAPEMTVLVGGLRVLGANYKRLPLGVFTEASESLTNDFFVNLLDMGITWEPSPADDGTYQGKDGSGKVKWTGSRVDLVFGSNSELRALVEVYGADDAQPKFVQDFVAAWDKVMNLDRFDVR.

Residues 107-229 (WHAAGTYRIH…LAAVQMGLIY (123 aa)) constitute a cross-link (tryptophyl-tyrosyl-methioninium (Trp-Tyr) (with M-255)). Catalysis depends on His-108, which acts as the Proton acceptor. Residues 229-255 (YVNPEGPNGNPDPMAAAVDIRETFRRM) constitute a cross-link (tryptophyl-tyrosyl-methioninium (Tyr-Met) (with W-107)). His-270 serves as a coordination point for heme b.

This sequence belongs to the peroxidase family. Peroxidase/catalase subfamily. As to quaternary structure, homodimer. Heme b is required as a cofactor. In terms of processing, formation of the three residue Trp-Tyr-Met cross-link is important for the catalase, but not the peroxidase activity of the enzyme.

The enzyme catalyses H2O2 + AH2 = A + 2 H2O. The catalysed reaction is 2 H2O2 = O2 + 2 H2O. In terms of biological role, bifunctional enzyme with both catalase and broad-spectrum peroxidase activity. May play a role in the intracellular survival of mycobacteria. This chain is Catalase-peroxidase, found in Mycobacterium bovis (strain ATCC BAA-935 / AF2122/97).